We begin with the raw amino-acid sequence, 66 residues long: DNA-directed RNA polymerase subunit Rpo10 (66 aa).

Residues cysteine 7, cysteine 10, cysteine 44, and cysteine 45 each contribute to the Zn(2+) site.

Belongs to the archaeal Rpo10/eukaryotic RPB10 RNA polymerase subunit family. Part of the RNA polymerase complex. Zn(2+) is required as a cofactor.

It localises to the cytoplasm. The catalysed reaction is RNA(n) + a ribonucleoside 5'-triphosphate = RNA(n+1) + diphosphate. In terms of biological role, DNA-dependent RNA polymerase (RNAP) catalyzes the transcription of DNA into RNA using the four ribonucleoside triphosphates as substrates. The chain is DNA-directed RNA polymerase subunit Rpo10 from Pyrobaculum aerophilum (strain ATCC 51768 / DSM 7523 / JCM 9630 / CIP 104966 / NBRC 100827 / IM2).